Reading from the N-terminus, the 666-residue chain is Threonine--tRNA ligase (666 aa).

A TGS domain is found at 1-64 (MSDTVSLTFP…VDGKIEIVTR (64 aa)). Positions 245 to 553 (DHRKLGREMD…LIENFAGHMP (309 aa)) are catalytic. Cysteine 347, histidine 398, and histidine 530 together coordinate Zn(2+).

It belongs to the class-II aminoacyl-tRNA synthetase family. Homodimer. Requires Zn(2+) as cofactor.

The protein localises to the cytoplasm. It catalyses the reaction tRNA(Thr) + L-threonine + ATP = L-threonyl-tRNA(Thr) + AMP + diphosphate + H(+). Its function is as follows. Catalyzes the attachment of threonine to tRNA(Thr) in a two-step reaction: L-threonine is first activated by ATP to form Thr-AMP and then transferred to the acceptor end of tRNA(Thr). Also edits incorrectly charged L-seryl-tRNA(Thr). The sequence is that of Threonine--tRNA ligase from Allorhizobium ampelinum (strain ATCC BAA-846 / DSM 112012 / S4) (Agrobacterium vitis (strain S4)).